The primary structure comprises 103 residues: V-type ATP synthase subunit F (103 aa).

It belongs to the V-ATPase F subunit family.

Its function is as follows. Produces ATP from ADP in the presence of a proton gradient across the membrane. The sequence is that of V-type ATP synthase subunit F from Clostridium botulinum (strain Alaska E43 / Type E3).